The chain runs to 276 residues: 2-dehydro-3-deoxyphosphooctonate aldolase (276 aa).

Belongs to the KdsA family.

The protein resides in the cytoplasm. It catalyses the reaction D-arabinose 5-phosphate + phosphoenolpyruvate + H2O = 3-deoxy-alpha-D-manno-2-octulosonate-8-phosphate + phosphate. It participates in carbohydrate biosynthesis; 3-deoxy-D-manno-octulosonate biosynthesis; 3-deoxy-D-manno-octulosonate from D-ribulose 5-phosphate: step 2/3. It functions in the pathway bacterial outer membrane biogenesis; lipopolysaccharide biosynthesis. The sequence is that of 2-dehydro-3-deoxyphosphooctonate aldolase from Helicobacter pylori (strain P12).